A 515-amino-acid chain; its full sequence is C-glycoside 3-oxidase (515 aa).

E41 contributes to the FAD binding site. The span at 62-82 shows a compositional bias: basic and acidic residues; the sequence is ERAHAQRRSEGPHAREDDDRV. Residues 62–90 form a disordered region; that stretch reads ERAHAQRRSEGPHAREDDDRVGGIVKSAQ. FAD contacts are provided by S118, N120, M124, T129, A131, and V237. H444 (proton acceptor) is an active-site residue. FAD-binding residues include N478 and T490.

This sequence belongs to the GMC oxidoreductase family. As to quaternary structure, monomer. It depends on FAD as a cofactor.

The enzyme catalyses isoorientin + O2 = 3''-dehydroisoorientin + H2O2. The catalysed reaction is mangiferin + O2 = 3'-dehydromangiferin + H2O2. FAD-dependent C-glycoside-metabolizing enzyme that participates in the degradation of certain C-glycosides by catalyzing the oxidation of the hydroxyl group at the C3 position of the sugar moiety. Shows oxidase activity toward C-glycosides such as isoorientin and mangiferin but cannot use carminic acid, puerarin, orientin or aloesin. Shows weak activity (100 to 1000-fold lower) with O-glycosides. Probably plays a crucial role in the metabolism of C-glycosides in nature. The sequence is that of C-glycoside 3-oxidase from Microbacterium trichothecenolyticum (Aureobacterium trichothecenolyticum).